We begin with the raw amino-acid sequence, 79 residues long: Large ribosomal subunit protein uL22 (79 aa).

This sequence belongs to the universal ribosomal protein uL22 family. As to quaternary structure, part of the 50S ribosomal subunit.

This protein binds specifically to 23S rRNA; its binding is stimulated by other ribosomal proteins, e.g. L4, L17, and L20. It is important during the early stages of 50S assembly. It makes multiple contacts with different domains of the 23S rRNA in the assembled 50S subunit and ribosome. Its function is as follows. The globular domain of the protein is located near the polypeptide exit tunnel on the outside of the subunit, while an extended beta-hairpin is found that lines the wall of the exit tunnel in the center of the 70S ribosome. In Prunus armeniaca phytoplasma, this protein is Large ribosomal subunit protein uL22 (rplV).